We begin with the raw amino-acid sequence, 459 residues long: Cysteine--tRNA ligase (459 aa).

Cys-29 lines the Zn(2+) pocket. The 'HIGH' region signature appears at 31-41 (MTVYDLCHLGH). Residues Cys-213, His-238, and Glu-242 each contribute to the Zn(2+) site. Positions 270-274 (KMSKS) match the 'KMSKS' region motif. Lys-273 contributes to the ATP binding site.

This sequence belongs to the class-I aminoacyl-tRNA synthetase family. Monomer. It depends on Zn(2+) as a cofactor.

The protein localises to the cytoplasm. It catalyses the reaction tRNA(Cys) + L-cysteine + ATP = L-cysteinyl-tRNA(Cys) + AMP + diphosphate. The sequence is that of Cysteine--tRNA ligase from Albidiferax ferrireducens (strain ATCC BAA-621 / DSM 15236 / T118) (Rhodoferax ferrireducens).